The primary structure comprises 1273 residues: Clustered mitochondria protein homolog (1273 aa).

The region spanning 344-599 (PANNADYSRM…NTYPLDVKFA (256 aa)) is the Clu domain. TPR repeat units lie at residues 981–1013 (SDQK…KEEV), 1022–1055 (AEKY…YERV), and 1151–1184 (ATLE…FTRE). 2 disordered regions span residues 1217–1242 (AEQA…KAEL) and 1254–1273 (IEGG…KGKK). The segment covering 1262-1273 (SKKKSSKKKGKK) has biased composition (basic residues).

The protein belongs to the CLU family. In terms of assembly, may associate with the eukaryotic translation initiation factor 3 (eIF-3) complex.

Its subcellular location is the cytoplasm. MRNA-binding protein involved in proper cytoplasmic distribution of mitochondria. The polypeptide is Clustered mitochondria protein homolog (Vanderwaltozyma polyspora (strain ATCC 22028 / DSM 70294 / BCRC 21397 / CBS 2163 / NBRC 10782 / NRRL Y-8283 / UCD 57-17) (Kluyveromyces polysporus)).